Here is a 408-residue protein sequence, read N- to C-terminus: 1-deoxy-D-xylulose 5-phosphate reductoisomerase (408 aa).

NADPH is bound by residues Thr26, Gly27, Ser28, Ile29, and Asn143. Lys144 is a 1-deoxy-D-xylulose 5-phosphate binding site. Glu145 contacts NADPH. Residue Asp167 coordinates Mn(2+). Residues Ser168, Glu169, Ser193, and His216 each coordinate 1-deoxy-D-xylulose 5-phosphate. Position 169 (Glu169) interacts with Mn(2+). Position 222 (Gly222) interacts with NADPH. Positions 229, 234, 235, and 238 each coordinate 1-deoxy-D-xylulose 5-phosphate. Glu238 contacts Mn(2+).

It belongs to the DXR family. Mg(2+) is required as a cofactor. Mn(2+) serves as cofactor.

It carries out the reaction 2-C-methyl-D-erythritol 4-phosphate + NADP(+) = 1-deoxy-D-xylulose 5-phosphate + NADPH + H(+). Its pathway is isoprenoid biosynthesis; isopentenyl diphosphate biosynthesis via DXP pathway; isopentenyl diphosphate from 1-deoxy-D-xylulose 5-phosphate: step 1/6. Catalyzes the NADPH-dependent rearrangement and reduction of 1-deoxy-D-xylulose-5-phosphate (DXP) to 2-C-methyl-D-erythritol 4-phosphate (MEP). The protein is 1-deoxy-D-xylulose 5-phosphate reductoisomerase of Corynebacterium jeikeium (strain K411).